The sequence spans 155 residues: UPF0461 protein C5orf24 homolog (155 aa).

A compositionally biased stretch (polar residues) spans 1-10 (MMHPVASSNP). The disordered stretch occupies residues 1–20 (MMHPVASSNPAFCGPGKPSC). Ser-37 is subject to Phosphoserine. The interval 40–155 (SKYSHTVNHK…QQAFRCSSDA (116 aa)) is disordered. Over residues 57–70 (DPLNETHLQTTSGR) the composition is skewed to polar residues. A Glycyl lysine isopeptide (Lys-Gly) (interchain with G-Cter in SUMO2) cross-link involves residue Lys-75. Residues 80–92 (KKKNLNRSGKRGR) show a composition bias toward basic residues. A compositionally biased stretch (polar residues) spans 94–107 (SGTTKSAGYRTSTG). Ser-121 is subject to Phosphoserine.

It belongs to the UPF0461 family.

The chain is UPF0461 protein C5orf24 homolog from Pongo abelii (Sumatran orangutan).